We begin with the raw amino-acid sequence, 397 residues long: 42.8 kDa protein in whiE locus (397 aa).

The segment at 1 to 22 (MTVSPVVATDAPSTDATRTTAT) is disordered. A compositionally biased stretch (low complexity) spans 8-22 (ATDAPSTDATRTTAT). Positions 46–137 (VRVVLMLDVH…DTHSLRYSVL (92 aa)) constitute an ABM domain.

It belongs to the SchA/CurD family.

The polypeptide is 42.8 kDa protein in whiE locus (Streptomyces coelicolor (strain ATCC BAA-471 / A3(2) / M145)).